The following is a 295-amino-acid chain: Mediator of RNA polymerase II transcription subunit 27 (295 aa).

The protein belongs to the Mediator complex subunit 27 family. As to quaternary structure, component of the Mediator complex.

Its subcellular location is the nucleus. Functionally, component of the Mediator complex, a coactivator involved in the regulated transcription of nearly all RNA polymerase II-dependent genes. Mediator functions as a bridge to convey information from gene-specific regulatory proteins to the basal RNA polymerase II transcription machinery. Mediator is recruited to promoters by direct interactions with regulatory proteins and serves as a scaffold for the assembly of a functional preinitiation complex with RNA polymerase II and the general transcription factors. The protein is Mediator of RNA polymerase II transcription subunit 27 (MED27) of Aedes aegypti (Yellowfever mosquito).